The following is a 173-amino-acid chain: Alpha-crystallin A chain (173 aa).

An N-acetylmethionine modification is found at M1. Residues 1 to 63 (MDIAIQHPWF…RTVLDSGISE (63 aa)) are required for complex formation with BFSP1 and BFSP2. Q6 carries the deamidated glutamine; partial modification. S45 carries the phosphoserine modification. The residue at position 50 (Q50) is a Deamidated glutamine; partial. In terms of domain architecture, sHSP spans 52-162 (LFRTVLDSGI…GHSERAIPVS (111 aa)). N6-acetyllysine is present on K70. At Q90 the chain carries Deamidated glutamine; partial. K99 carries the N6-acetyllysine modification. Residue H100 coordinates Zn(2+). Residue N101 is modified to Deamidated asparagine; partial. E102 and H107 together coordinate Zn(2+). S122 carries the phosphoserine modification. Residue N123 is modified to Deamidated asparagine; partial. The disordered stretch occupies residues 144-173 (PKIPSGVDAGHSERAIPVSREEKPSSAPSS). The segment covering 153–167 (GHSERAIPVSREEKP) has biased composition (basic and acidic residues). H154 contacts Zn(2+). S162 carries an O-linked (GlcNAc) serine glycan.

This sequence belongs to the small heat shock protein (HSP20) family. In terms of assembly, heteromer composed of three CRYAA and one CRYAB subunits. Inter-subunit bridging via zinc ions enhances stability, which is crucial as there is no protein turn over in the lens. Can also form homodimers and homotetramers (dimers of dimers) which serve as the building blocks of homooligomers. Within homooligomers, the zinc-binding motif is created from residues of 3 different molecules. His-100 and Glu-102 from one molecule are ligands of the zinc ion, and His-107 and His-154 residues from additional molecules complete the site with tetrahedral coordination geometry. Part of a complex required for lens intermediate filament formation composed of BFSP1, BFSP2 and CRYAA. In terms of processing, acetylation at Lys-70 may increase chaperone activity. Undergoes age-dependent proteolytical cleavage at the C-terminus.

It localises to the cytoplasm. The protein localises to the nucleus. Its function is as follows. Contributes to the transparency and refractive index of the lens. Acts as a chaperone, preventing aggregation of various proteins under a wide range of stress conditions. Required for the correct formation of lens intermediate filaments as part of a complex composed of BFSP1, BFSP2 and CRYAA. In Giraffa camelopardalis (Giraffe), this protein is Alpha-crystallin A chain (CRYAA).